A 619-amino-acid polypeptide reads, in one-letter code: Type VI secretion system component TssF1 (619 aa).

In terms of assembly, interacts with TssA1.

Core component of the H1 type VI (H1-T6SS) secretion system that plays a role in the release of toxins targeting both eukaryotic and prokaryotic species. In Pseudomonas aeruginosa (strain ATCC 15692 / DSM 22644 / CIP 104116 / JCM 14847 / LMG 12228 / 1C / PRS 101 / PAO1), this protein is Type VI secretion system component TssF1.